The primary structure comprises 236 residues: Sugar fermentation stimulation protein homolog (236 aa).

This sequence belongs to the SfsA family.

The protein is Sugar fermentation stimulation protein homolog of Synechococcus elongatus (strain ATCC 33912 / PCC 7942 / FACHB-805) (Anacystis nidulans R2).